The following is a 508-amino-acid chain: Photosystem II CP47 reaction center protein (508 aa).

6 helical membrane passes run 21 to 36, 101 to 115, 140 to 156, 203 to 218, 237 to 252, and 457 to 472; these read SVHI…WAGS, IVFS…IWHW, GIHL…FGAF, IAAG…FHLS, VLSS…AFVV, and SFAL…HGSR.

It belongs to the PsbB/PsbC family. PsbB subfamily. In terms of assembly, PSII is composed of 1 copy each of membrane proteins PsbA, PsbB, PsbC, PsbD, PsbE, PsbF, PsbH, PsbI, PsbJ, PsbK, PsbL, PsbM, PsbT, PsbX, PsbY, PsbZ, Psb30/Ycf12, at least 3 peripheral proteins of the oxygen-evolving complex and a large number of cofactors. It forms dimeric complexes. Requires Binds multiple chlorophylls. PSII binds additional chlorophylls, carotenoids and specific lipids. as cofactor.

Its subcellular location is the plastid. The protein localises to the chloroplast thylakoid membrane. One of the components of the core complex of photosystem II (PSII). It binds chlorophyll and helps catalyze the primary light-induced photochemical processes of PSII. PSII is a light-driven water:plastoquinone oxidoreductase, using light energy to abstract electrons from H(2)O, generating O(2) and a proton gradient subsequently used for ATP formation. The polypeptide is Photosystem II CP47 reaction center protein (Fagopyrum esculentum subsp. ancestrale (Wild buckwheat)).